A 458-amino-acid polypeptide reads, in one-letter code: F-box/WD repeat-containing protein 9 (458 aa).

N-acetylmethionine is present on Met1. The interval 1–28 is disordered; it reads MELPPGPRDDPHAWDDDSDPELEPDTDA. Acidic residues predominate over residues 16-28; it reads DDSDPELEPDTDA. Phosphoserine occurs at positions 18 and 59. The F-box domain maps to 76–123; sequence VPGLLSLPPELLLEICAYLDARLVLHVLPRVCHALRDLVRDRVTWRLR. 7 WD repeats span residues 171 to 210, 224 to 261, 264 to 301, 305 to 342, 344 to 381, 387 to 424, and 427 to 458; these read GHFA…VEPS, THKG…QQFG, KGKA…ALLK, LHSS…VLQR, QLDS…FQLV, GHRS…RTIC, and SHHN…RLQA.

As to quaternary structure, interacts with SKP1 and CUL1.

In terms of biological role, substrate-recognition component of the SCF (SKP1-CUL1-F-box protein)-type E3 ubiquitin ligase complex. This Bos taurus (Bovine) protein is F-box/WD repeat-containing protein 9 (FBXW9).